The primary structure comprises 596 residues: Leucine-rich repeat and IQ domain-containing protein 4 (596 aa).

LRR repeat units follow at residues 22-44 (LPRLHRFDIIDTFKTLTKELLRQ), 59-83 (LTDRTFFIDGSNQGLKTIPSEILAL), 84-106 (KELEEVHLENNQIAEIPQGIQQL), 108-129 (NTKVLYLHNNSLQDLCPELGAL), 130-152 (SSLESLDLSGNPLVISSLHVVSR), 153-176 (LRTLRELRLYRTGLTEIPTGICKS), 177-200 (LHHLELFGLSENFLESLPEEIVNQ), 202-223 (KLREIYLKQNHFEVFPCDLCVL), 224-246 (YNLEVIDLDENKLKSIPGDIGHL), 248-269 (RLQKFYVASNHLMSLPESLSQC), 270-293 (SKLSVLDLTHNSIHSLPSSLELLT), 295-315 (LTEVGLSGNRLEKVPRLLCSW), 317-337 (SLHLLYLRNTSLHGLRDSFKR), 338-361 (LINLRFLDLSQNHIEHFPVQICAL), 362-384 (KNLEILALDDNKVRQLPPSISLL), 385-407 (SNLKILGLTGNDLLSFPEEIFSL), 410-433 (LEKLYIGQDQGSKLSSLPENIKRL), 434-457 (MNLKELYIENNRLEQLPASLGLMP), 459-479 (LEVLDCRHNLLKQLPDAICRT), 480-502 (RNLRELLLEDNLLCCLPENLDHL), 504-525 (NLKVLTLMNNPMVDPPIYVCNQ), and 527-549 (NEAIWKHLKENRIRKMMATTIQA). Residues 540–569 (RKMMATTIQAWWRGIMVRKGYGSYEELLKA) enclose the IQ domain. Basic residues predominate over residues 569–587 (ARKKGKSPPKDKKGKKAAK). Positions 569 to 596 (ARKKGKSPPKDKKGKKAAKGKPEKGNKK) are disordered.

This chain is Leucine-rich repeat and IQ domain-containing protein 4 (Lrriq4), found in Mus musculus (Mouse).